The chain runs to 715 residues: Photosystem I P700 chlorophyll a apoprotein A1 (715 aa).

8 helical membrane-spanning segments follow: residues 60 to 83 (VFSA…FHGA), 146 to 169 (LYST…FHYH), 185 to 209 (LNHH…HVSL), 281 to 299 (TVHH…GHMY), 336 to 359 (WHAQ…HHMY), 375 to 401 (LSLF…IFMV), 423 to 445 (AIIS…LYIH), and 521 to 539 (FLVH…LILL). Residues C563 and C572 each coordinate [4Fe-4S] cluster. 2 helical membrane-spanning segments follow: residues 579-600 (HVFL…HFSW) and 654-676 (LSAY…MFLF). H665 is a binding site for chlorophyll a'. Chlorophyll a contacts are provided by M673 and Y681. W682 is a phylloquinone binding site. The chain crosses the membrane as a helical span at residues 714–715 (AE).

This sequence belongs to the PsaA/PsaB family. The PsaA/B heterodimer binds the P700 chlorophyll special pair and subsequent electron acceptors. PSI consists of a core antenna complex that captures photons, and an electron transfer chain that converts photonic excitation into a charge separation. The eukaryotic PSI reaction center is composed of at least 11 subunits. P700 is a chlorophyll a/chlorophyll a' dimer, A0 is one or more chlorophyll a, A1 is one or both phylloquinones and FX is a shared 4Fe-4S iron-sulfur center. is required as a cofactor.

It is found in the plastid. It localises to the chloroplast thylakoid membrane. It carries out the reaction reduced [plastocyanin] + hnu + oxidized [2Fe-2S]-[ferredoxin] = oxidized [plastocyanin] + reduced [2Fe-2S]-[ferredoxin]. In terms of biological role, psaA and PsaB bind P700, the primary electron donor of photosystem I (PSI), as well as the electron acceptors A0, A1 and FX. PSI is a plastocyanin-ferredoxin oxidoreductase, converting photonic excitation into a charge separation, which transfers an electron from the donor P700 chlorophyll pair to the spectroscopically characterized acceptors A0, A1, FX, FA and FB in turn. Oxidized P700 is reduced on the lumenal side of the thylakoid membrane by plastocyanin. This Phlegmariurus squarrosus (Rock tassel fern) protein is Photosystem I P700 chlorophyll a apoprotein A1.